Consider the following 104-residue polypeptide: Large ribosomal subunit protein uL23 (104 aa).

Belongs to the universal ribosomal protein uL23 family. In terms of assembly, part of the 50S ribosomal subunit. Contacts protein L29, and trigger factor when it is bound to the ribosome.

Functionally, one of the early assembly proteins it binds 23S rRNA. One of the proteins that surrounds the polypeptide exit tunnel on the outside of the ribosome. Forms the main docking site for trigger factor binding to the ribosome. This Paraburkholderia phytofirmans (strain DSM 17436 / LMG 22146 / PsJN) (Burkholderia phytofirmans) protein is Large ribosomal subunit protein uL23.